A 1300-amino-acid chain; its full sequence is Serine protease EspP (1300 aa).

The signal sequence occupies residues 1–55 (MNKIYSLKYSHITGGLIAVSELSGRVSSRATGKKKHKRILALCFLGLLQSSYSFA). One can recognise a Peptidase S6 domain in the interval 57–311 (QMDISNFYIR…NQTTIDNLKN (255 aa)). Residues His-127, Asp-156, and Ser-263 each act as charge relay system in the active site. An Autotransporter domain is found at 1034–1300 (DINGEAGAWA…AVNANFRYSF (267 aa)).

Post-translationally, cleaved to release the mature protein from the outer membrane.

Its subcellular location is the periplasm. The protein resides in the secreted. It localises to the cell surface. The protein localises to the cell outer membrane. In terms of biological role, serine protease with cytotoxic effect. Disrupts actin cytoskeleton resulting cell detachment in vitro. This chain is Serine protease EspP (espP), found in Escherichia coli.